Consider the following 345-residue polypeptide: N-acetyl-gamma-glutamyl-phosphate reductase (345 aa).

Cys-149 is an active-site residue.

This sequence belongs to the NAGSA dehydrogenase family. Type 1 subfamily.

It is found in the cytoplasm. It carries out the reaction N-acetyl-L-glutamate 5-semialdehyde + phosphate + NADP(+) = N-acetyl-L-glutamyl 5-phosphate + NADPH + H(+). It functions in the pathway amino-acid biosynthesis; L-arginine biosynthesis; N(2)-acetyl-L-ornithine from L-glutamate: step 3/4. Its function is as follows. Catalyzes the NADPH-dependent reduction of N-acetyl-5-glutamyl phosphate to yield N-acetyl-L-glutamate 5-semialdehyde. The protein is N-acetyl-gamma-glutamyl-phosphate reductase of Herminiimonas arsenicoxydans.